A 371-amino-acid polypeptide reads, in one-letter code: MLNEFIAIRRELHQIPETGYKELKTQAYLLDYISKLPSEHLEVKKWRTGILVLVKGNNPEKTIGYRTDIDALPITEETGLPFASKHPGNMHACGHDLHMSIALGVLTHFASKPAKDNLLFVFQPAEEGPGGAKPIMESAEFAEWRPDSIYGLHIAPEYKVGEIAIKPGLLFANTSELFISFKGKGGHAAYPHLANDMVVAASAFVGQMQTIISRNIDPMDSAVITIGRIHGGEIQNVIAETAYLDGTIRTLSPETMQIVWTRLKQLAKGWEEAYQCEVEFHPGSDYYQVDNDPVETEEFIHFLEEQYPESYVPARSAMTGEDFGYFLSEIKGFMFWLGVDSEYSLHHAKLSPKEEAIPFAIDVLIHFLESK.

The active site involves Asp-68. Glu-127 functions as the Proton acceptor in the catalytic mechanism.

This sequence belongs to the peptidase M20A family. N-acetyldiaminopimelate deacetylase subfamily.

The enzyme catalyses N-acetyl-(2S,6S)-2,6-diaminopimelate + H2O = (2S,6S)-2,6-diaminopimelate + acetate. Its pathway is amino-acid biosynthesis; L-lysine biosynthesis via DAP pathway; LL-2,6-diaminopimelate from (S)-tetrahydrodipicolinate (acetylase route): step 3/3. Catalyzes the conversion of N-acetyl-diaminopimelate to diaminopimelate and acetate. This Listeria monocytogenes serotype 4a (strain HCC23) protein is N-acetyldiaminopimelate deacetylase.